A 331-amino-acid chain; its full sequence is Anthranilate phosphoribosyltransferase (331 aa).

5-phospho-alpha-D-ribose 1-diphosphate is bound by residues G79, 82–83 (GD), T87, 89–92 (NIST), 107–115 (KHGNYGATS), and A119. Anthranilate is bound at residue G79. S91 is a Mg(2+) binding site. N110 provides a ligand contact to anthranilate. R165 serves as a coordination point for anthranilate. Positions 223 and 224 each coordinate Mg(2+).

This sequence belongs to the anthranilate phosphoribosyltransferase family. As to quaternary structure, homodimer. Requires Mg(2+) as cofactor.

The catalysed reaction is N-(5-phospho-beta-D-ribosyl)anthranilate + diphosphate = 5-phospho-alpha-D-ribose 1-diphosphate + anthranilate. Its pathway is amino-acid biosynthesis; L-tryptophan biosynthesis; L-tryptophan from chorismate: step 2/5. Its function is as follows. Catalyzes the transfer of the phosphoribosyl group of 5-phosphorylribose-1-pyrophosphate (PRPP) to anthranilate to yield N-(5'-phosphoribosyl)-anthranilate (PRA). In Bacteroides fragilis (strain ATCC 25285 / DSM 2151 / CCUG 4856 / JCM 11019 / LMG 10263 / NCTC 9343 / Onslow / VPI 2553 / EN-2), this protein is Anthranilate phosphoribosyltransferase.